Consider the following 86-residue polypeptide: Photosystem I reaction center subunit PsaK (86 aa).

The chain crosses the membrane as a helical span at residues Pro-15 to Ala-34.

It belongs to the PsaG/PsaK family.

The protein resides in the plastid. It is found in the chloroplast thylakoid membrane. The sequence is that of Photosystem I reaction center subunit PsaK from Pyropia yezoensis (Susabi-nori).